The primary structure comprises 134 residues: Ribosome-binding factor A (134 aa).

The protein belongs to the RbfA family. In terms of assembly, monomer. Binds 30S ribosomal subunits, but not 50S ribosomal subunits or 70S ribosomes.

The protein resides in the cytoplasm. Its function is as follows. One of several proteins that assist in the late maturation steps of the functional core of the 30S ribosomal subunit. Associates with free 30S ribosomal subunits (but not with 30S subunits that are part of 70S ribosomes or polysomes). Required for efficient processing of 16S rRNA. May interact with the 5'-terminal helix region of 16S rRNA. This is Ribosome-binding factor A from Bdellovibrio bacteriovorus (strain ATCC 15356 / DSM 50701 / NCIMB 9529 / HD100).